The following is a 542-amino-acid chain: CTP synthase (542 aa).

The tract at residues M1–L265 is amidoligase domain. S13 serves as a coordination point for CTP. S13 serves as a coordination point for UTP. ATP contacts are provided by residues S14–I19 and D71. Positions 71 and 139 each coordinate Mg(2+). Residues D146 to E148, K186 to Q191, and K222 each bind CTP. UTP-binding positions include K186–Q191 and K222. In terms of domain architecture, Glutamine amidotransferase type-1 spans T290–G541. G351 provides a ligand contact to L-glutamine. The active-site Nucleophile; for glutamine hydrolysis is C378. L-glutamine-binding positions include L379–Q382, E402, and R469. Catalysis depends on residues H514 and E516.

This sequence belongs to the CTP synthase family. As to quaternary structure, homotetramer.

The enzyme catalyses UTP + L-glutamine + ATP + H2O = CTP + L-glutamate + ADP + phosphate + 2 H(+). The catalysed reaction is L-glutamine + H2O = L-glutamate + NH4(+). It carries out the reaction UTP + NH4(+) + ATP = CTP + ADP + phosphate + 2 H(+). Its pathway is pyrimidine metabolism; CTP biosynthesis via de novo pathway; CTP from UDP: step 2/2. Its activity is regulated as follows. Allosterically activated by GTP, when glutamine is the substrate; GTP has no effect on the reaction when ammonia is the substrate. The allosteric effector GTP functions by stabilizing the protein conformation that binds the tetrahedral intermediate(s) formed during glutamine hydrolysis. Inhibited by the product CTP, via allosteric rather than competitive inhibition. In terms of biological role, catalyzes the ATP-dependent amination of UTP to CTP with either L-glutamine or ammonia as the source of nitrogen. Regulates intracellular CTP levels through interactions with the four ribonucleotide triphosphates. The polypeptide is CTP synthase (Marinobacter nauticus (strain ATCC 700491 / DSM 11845 / VT8) (Marinobacter aquaeolei)).